The primary structure comprises 71 residues: Antitoxin VapB22 (71 aa).

Belongs to the phD/YefM antitoxin family.

Its function is as follows. Antitoxin component of a type II toxin-antitoxin (TA) system. Upon expression in M.smegmatis neutralizes the effect of cognate toxin VapC22. This chain is Antitoxin VapB22 (vapB22), found in Mycobacterium tuberculosis (strain ATCC 25618 / H37Rv).